A 309-amino-acid chain; its full sequence is Uridylate-specific endoribonuclease C (309 aa).

Positions 1–22 (MASGYDFGWIPVLLSLFTLTDA) are cleaved as a signal peptide. In terms of domain architecture, EndoU spans 27–303 (VNQELSNIFN…IGTAYPKLLS (277 aa)). N-linked (GlcNAc...) asparagine glycans are attached at residues Asn53 and Asn121. Residues His181, His197, and Lys242 contribute to the active site.

The protein belongs to the ENDOU family. In terms of assembly, monomer. The cofactor is Mn(2+).

Its subcellular location is the secreted. The catalysed reaction is ribonucleotidyl-uridine-RNA = a 5'-end dephospho-uridine-RNA + a 3'-end 2',3'-cyclophospho-ribonucleotide-RNA. Functionally, endoribonuclease that cleaves single-stranded RNAs at 5' of uridylates and releases a product with a 2',3'-cyclic phosphate at the 3'-end. The UU and GU sites are more efficiently cleaved than CU and AU sites. The polypeptide is Uridylate-specific endoribonuclease C (endouc) (Danio rerio (Zebrafish)).